The primary structure comprises 130 residues: Small ribosomal subunit protein uS8 (130 aa).

It belongs to the universal ribosomal protein uS8 family. Part of the 30S ribosomal subunit. Contacts proteins S5 and S12.

One of the primary rRNA binding proteins, it binds directly to 16S rRNA central domain where it helps coordinate assembly of the platform of the 30S subunit. The protein is Small ribosomal subunit protein uS8 of Tolumonas auensis (strain DSM 9187 / NBRC 110442 / TA 4).